A 561-amino-acid chain; its full sequence is Potassium-transporting ATPase potassium-binding subunit (561 aa).

12 consecutive transmembrane segments (helical) span residues 1–21 (MMAS…LLAR), 62–82 (YLLA…LILM), 132–152 (GLTV…FALM), 173–193 (ITLY…VSQG), 253–273 (FVQM…FGDV), 283–303 (LLWS…WAEV), 327–347 (FGIL…CGAV), 356–376 (ALGG…FGGV), 379–399 (GLYG…LMIG), 416–436 (MTAL…ALAM), 483–503 (MLLA…VLAI), and 526–546 (LFIA…FIPA).

This sequence belongs to the KdpA family. The system is composed of three essential subunits: KdpA, KdpB and KdpC.

It is found in the cell inner membrane. Its function is as follows. Part of the high-affinity ATP-driven potassium transport (or Kdp) system, which catalyzes the hydrolysis of ATP coupled with the electrogenic transport of potassium into the cytoplasm. This subunit binds the periplasmic potassium ions and delivers the ions to the membrane domain of KdpB through an intramembrane tunnel. This Erwinia tasmaniensis (strain DSM 17950 / CFBP 7177 / CIP 109463 / NCPPB 4357 / Et1/99) protein is Potassium-transporting ATPase potassium-binding subunit.